We begin with the raw amino-acid sequence, 243 residues long: UPF0246 protein Sez_1855 (243 aa).

The protein belongs to the UPF0246 family.

The sequence is that of UPF0246 protein Sez_1855 from Streptococcus equi subsp. zooepidemicus (strain MGCS10565).